The sequence spans 197 residues: Holliday junction branch migration complex subunit RuvA (197 aa).

Residues 1-63 (MIEFIRGYVD…EDVLALYGFH (63 aa)) are domain I. The domain II stretch occupies residues 64 to 142 (TRQERMLFAK…AIVPDAFPNL (79 aa)). Residues 143–149 (FTEPLEE) are flexible linker. The interval 149-197 (ETNALSEAIEALKALGYADKEIQKVVPMLRQERLSTEGYIKLALQKLLK) is domain III.

The protein belongs to the RuvA family. Homotetramer. Forms an RuvA(8)-RuvB(12)-Holliday junction (HJ) complex. HJ DNA is sandwiched between 2 RuvA tetramers; dsDNA enters through RuvA and exits via RuvB. An RuvB hexamer assembles on each DNA strand where it exits the tetramer. Each RuvB hexamer is contacted by two RuvA subunits (via domain III) on 2 adjacent RuvB subunits; this complex drives branch migration. In the full resolvosome a probable DNA-RuvA(4)-RuvB(12)-RuvC(2) complex forms which resolves the HJ.

The protein resides in the cytoplasm. Functionally, the RuvA-RuvB-RuvC complex processes Holliday junction (HJ) DNA during genetic recombination and DNA repair, while the RuvA-RuvB complex plays an important role in the rescue of blocked DNA replication forks via replication fork reversal (RFR). RuvA specifically binds to HJ cruciform DNA, conferring on it an open structure. The RuvB hexamer acts as an ATP-dependent pump, pulling dsDNA into and through the RuvAB complex. HJ branch migration allows RuvC to scan DNA until it finds its consensus sequence, where it cleaves and resolves the cruciform DNA. The sequence is that of Holliday junction branch migration complex subunit RuvA from Anoxybacillus flavithermus (strain DSM 21510 / WK1).